The following is a 779-amino-acid chain: Cell division control protein 4 (779 aa).

The tract at residues 39-80 (AGTHRNSSTAKTVETEDGEEDIDEYQRKRAAGSGESTPERSD) is disordered. The Nuclear localization signal motif lies at 82–85 (KRVK). Ser104 carries the post-translational modification Phosphoserine. The F-box domain maps to 272–319 (RDLITSLPFEISLKIFNYLQFEDIINSLGVSQNWNKIIRKSTSLWKKL). 7 WD repeats span residues 380–408 (HMTS…RVYD), 420–449 (GHDG…RVWD), 461–493 (GHNS…HVWK), 528–556 (GHMA…IVWD), 568–598 (GHTD…RIWD), 630–658 (GHTA…RGWD), and 669–698 (HHTN…NIYN).

Interacts with DCD53 and SKP1. Component of the SCF(CDC4) complex containing CDC53, SKP1, RBX1 and CDC4. CDC34. Interacts with CDC6 and CIC1. Interacts with SIC1; the interaction involves a SIC1 double phosphorylated motif (degron). Homodimerizes; the dimerization increases SIC1 ubiquitination in vitro.

Its subcellular location is the nucleus. It participates in protein modification; protein ubiquitination. Substrate recognition component of a SCF (SKP1-CUL1-F-box protein) E3 ubiquitin-protein ligase complex which mediates the ubiquitination and subsequent proteasomal degradation of target proteins. Recognizes and binds to phosphorylated target proteins. Directs ubiquitination of the phosphorylated CDK inhibitor SIC1. Involved in the degradation of CDC6 together with CDC34/UBC3 and CDC53, and in restricting the degradation of FAR1 to the nucleus. Is essential for initiation of DNA replication and separation of the spindle pole bodies to form the poles of the mitotic spindle. It also plays a role in bud development, fusion of zygotic nuclei after conjugation and various aspects of sporulation. Required for HTA1-HTB1 locus transcription activation. Required for G1/S and G2/M transition. The protein is Cell division control protein 4 (CDC4) of Saccharomyces cerevisiae (strain ATCC 204508 / S288c) (Baker's yeast).